A 426-amino-acid polypeptide reads, in one-letter code: Probable serine/threonine-protein kinase PBL2 (426 aa).

Residues 1–54 (MGNCLDSSAKVDNSNHSPHANSASSGSKVSSKTSRSTGPSGLSTTSYSTDSSFG) are disordered. G2 is lipidated: N-myristoyl glycine. A lipid anchor (S-palmitoyl cysteine) is attached at C4. Low complexity predominate over residues 14 to 38 (SNHSPHANSASSGSKVSSKTSRSTG). Polar residues predominate over residues 39-52 (PSGLSTTSYSTDSS). T75 is subject to Phosphothreonine. The 284-residue stretch at 86-369 (FRQDNLLGEG…SEVLVTLEQL (284 aa)) folds into the Protein kinase domain. Residues 92–100 (LGEGGFGCV) and K124 contribute to the ATP site. Y169 carries the post-translational modification Phosphotyrosine. The active-site Proton acceptor is D219. S253 is subject to O-UMP-serine. S253 is modified (phosphoserine). T254 and T259 each carry phosphothreonine. T254 is subject to O-UMP-threonine. At Y267 the chain carries Phosphotyrosine. The interval 374–426 (KPGTKHTQMESPRFHHSSVMQKSPVRYSHDRPLLHMTPGASPLPSYTQSPRVR) is disordered. Positions 417 to 426 (PSYTQSPRVR) are enriched in polar residues.

Belongs to the protein kinase superfamily. Ser/Thr protein kinase family. Interacts with FLS2. Interacts with the Xanthomonas campestris effector XopAC/AvrAC; the recognition of X.campestris effector XopAC/AvrAC requires the presence of RKS1 and RPP13L4/ZAR1. Component of a stable high-order oligomeric complex made of RKS1 and RPP13L4/ZAR1 which recruits X.campestris effector XopAC/AvrAC-mediated uridylylated PBL2 in the presence of ATP to form a wheel-like pentameric resistosome; this complex triggers immunity toward X.campestris in vascular tissues. Binds to RKS1 when uridylylated. Uridylylated at Ser-253 and Thr-254 by Xanthomonas campestris effector AvrAC/XopAC; this uridylylation is necessary for specific recruitment to RKS1 and to trigger immunity. Strongly expressed in leaves, moderately in roots, and barely in flowers, mostly in pedicels.

The protein resides in the cell membrane. It localises to the nucleus. It carries out the reaction L-seryl-[protein] + ATP = O-phospho-L-seryl-[protein] + ADP + H(+). The enzyme catalyses L-threonyl-[protein] + ATP = O-phospho-L-threonyl-[protein] + ADP + H(+). Functionally, involved in disease resistance signaling. Contributes to pathogen-associated molecular pattern (PAMP)-triggered immunity (PTI) signaling and defense responses downstream of FLS2. Acts as a BIK1 decoy and enables Xanthomonas campestris AvrAC/XopAC detection; X.campestris effector AvrAC/XopAC-mediated uridylylation promotes the formation of a complex with RKS1 and RPP13L4/ZAR1 which, in turn, activates effector-triggered immunity (ETI) against X.campestris. Promotes, when uridylylated by AvrAC/XopAC, the release of ADP from the inactive RKS1-ZAR1 complex, thus activating the resistosome. This Arabidopsis thaliana (Mouse-ear cress) protein is Probable serine/threonine-protein kinase PBL2.